Reading from the N-terminus, the 235-residue chain is Vacuolar protein sorting-associated protein 60.2 (235 aa).

Residues 1–30 (MKRIFGAKNNKEPPPSIQDASDRINKRGDS) are disordered. The segment covering 20 to 30 (ASDRINKRGDS) has biased composition (basic and acidic residues). The stretch at 99-148 (LKDAQQTMTALKSANKELKGMMKTVKIQDIDNLQDDMMDLMDESSEIQET) forms a coiled coil. The segment at 174–235 (DMGNETEADG…PAVPRASLRG (62 aa)) is disordered.

This sequence belongs to the SNF7 family.

The protein localises to the endosome. Its subcellular location is the multivesicular body membrane. In terms of biological role, probable peripherally associated component of the endosomal sorting required for transport complex III (ESCRT-III) which is involved in multivesicular bodies (MVBs) formation and sorting of endosomal cargo proteins into MVBs. In Arabidopsis thaliana (Mouse-ear cress), this protein is Vacuolar protein sorting-associated protein 60.2.